A 141-amino-acid chain; its full sequence is Small ribosomal subunit protein uS8c (141 aa).

It belongs to the universal ribosomal protein uS8 family. In terms of assembly, part of the 30S ribosomal subunit.

Its subcellular location is the plastid. It localises to the chloroplast. In terms of biological role, one of the primary rRNA binding proteins, it binds directly to 16S rRNA central domain where it helps coordinate assembly of the platform of the 30S subunit. The polypeptide is Small ribosomal subunit protein uS8c (rps8) (Pleurastrum terricola (Filamentous green alga)).